The sequence spans 270 residues: 2-dehydro-3-deoxyphosphooctonate aldolase (270 aa).

It belongs to the KdsA family.

The protein localises to the cytoplasm. It catalyses the reaction D-arabinose 5-phosphate + phosphoenolpyruvate + H2O = 3-deoxy-alpha-D-manno-2-octulosonate-8-phosphate + phosphate. The protein operates within carbohydrate biosynthesis; 3-deoxy-D-manno-octulosonate biosynthesis; 3-deoxy-D-manno-octulosonate from D-ribulose 5-phosphate: step 2/3. Its pathway is bacterial outer membrane biogenesis; lipopolysaccharide biosynthesis. The polypeptide is 2-dehydro-3-deoxyphosphooctonate aldolase (Helicobacter hepaticus (strain ATCC 51449 / 3B1)).